Consider the following 120-residue polypeptide: NAD(P)H-quinone oxidoreductase subunit 3 (120 aa).

Transmembrane regions (helical) follow at residues 6–26 (GYDA…LALI), 64–84 (MFAL…PWAV), and 89–109 (LGVL…VALA).

The protein belongs to the complex I subunit 3 family. In terms of assembly, NDH-1 can be composed of about 15 different subunits; different subcomplexes with different compositions have been identified which probably have different functions.

It is found in the cellular thylakoid membrane. It carries out the reaction a plastoquinone + NADH + (n+1) H(+)(in) = a plastoquinol + NAD(+) + n H(+)(out). The enzyme catalyses a plastoquinone + NADPH + (n+1) H(+)(in) = a plastoquinol + NADP(+) + n H(+)(out). Functionally, NDH-1 shuttles electrons from an unknown electron donor, via FMN and iron-sulfur (Fe-S) centers, to quinones in the respiratory and/or the photosynthetic chain. The immediate electron acceptor for the enzyme in this species is believed to be plastoquinone. Couples the redox reaction to proton translocation, and thus conserves the redox energy in a proton gradient. Cyanobacterial NDH-1 also plays a role in inorganic carbon-concentration. The polypeptide is NAD(P)H-quinone oxidoreductase subunit 3 (Parasynechococcus marenigrum (strain WH8102)).